The following is a 245-amino-acid chain: MTSATKTNNSGSISSPIVVALDYANKDAALAFADQVSPQDCRLKVGKEMFTLYGPELIRDLHQRGFDVFLDLKFHDIPNTTARAVAAAAELGVWMVNVHASGGARMMSAAKEALLPYGAQAPLLIAVTVLTSMDGEDLRDIGITISPAEQAERLAKLTWDCGLDGVVCSAHEAVRLKQVCGEDFSLVTPGIRPQGSEAGDQRRIMTPEQAVAVGVDYMVIGRPITQSPDPEKTLREILASLTKVA.

Residues Asp-22, Lys-44, 71 to 80, Thr-131, Arg-192, Gln-201, Gly-221, and Arg-222 each bind substrate; that span reads DLKFHDIPNT. Lys-73 acts as the Proton donor in catalysis.

Belongs to the OMP decarboxylase family. Type 1 subfamily. As to quaternary structure, homodimer.

It catalyses the reaction orotidine 5'-phosphate + H(+) = UMP + CO2. The protein operates within pyrimidine metabolism; UMP biosynthesis via de novo pathway; UMP from orotate: step 2/2. Functionally, catalyzes the decarboxylation of orotidine 5'-monophosphate (OMP) to uridine 5'-monophosphate (UMP). This is Orotidine 5'-phosphate decarboxylase from Yersinia pestis bv. Antiqua (strain Antiqua).